The chain runs to 815 residues: Leucine--tRNA ligase (815 aa).

A 'HIGH' region motif is present at residues 40-50; the sequence is PYPSGRIHMGH. Residues 583–587 carry the 'KMSKS' region motif; the sequence is KMSKS. Position 586 (K586) interacts with ATP.

This sequence belongs to the class-I aminoacyl-tRNA synthetase family.

Its subcellular location is the cytoplasm. It catalyses the reaction tRNA(Leu) + L-leucine + ATP = L-leucyl-tRNA(Leu) + AMP + diphosphate. This Nitratiruptor sp. (strain SB155-2) protein is Leucine--tRNA ligase.